A 610-amino-acid polypeptide reads, in one-letter code: Menin (610 aa).

The interaction with FANCD2 stretch occupies residues 214 to 390; it reads GVAERSWLYL…SLLEAGEERP (177 aa). Residues 460-552 form a disordered region; sequence REAEAAEAEE…SPPPEGPVLT (93 aa). Positions 484–500 are enriched in basic and acidic residues; it reads RRESKPEEPPPPKKPAL. 2 positions are modified to phosphoserine: Ser487 and Ser543. Thr594 is modified (phosphothreonine).

As to quaternary structure, component of the MLL-HCF complex, at least composed of KMT2A/MLL1, MEN1, ASH2L, RBBP5, DPY30, WDR5, HCFC1 and HCFC2. Component of the menin-associated histone methyltransferase complex, at least composed of KMT2B/MLL4, MEN1, ASH2L, RBBP5, DPY30 and WDR5. Interacts with POLR2B. Interacts with POLR2A phosphorylated at 'Ser-5', but not with the unphosphorylated, nor 'Ser-2' phosphorylated POLR2A forms. Interacts with FANCD2 and DBF4. Interacts with JUND (via MBM motif); inhibits the interaction of JUND with MAPK10 and the phosphorylation of JUND by MAP kinases MAPK8 and MAPK10. Interacts with SMAD3, but not with SMAD2, nor SMAD4. Directly interacts with NFKB1, NFKB2 and RELA. Interacts with KMT2A (via MBM motif). The KMT2A-MEN1 complex interacts with PSIP1 with a greater affinity as MEN1 enhances interaction of KMT2A with PSIP1. Interacts with the fusion protein KMT2A-MLLT3. Ubiquitous.

The protein resides in the nucleus. Essential component of a MLL/SET1 histone methyltransferase (HMT) complex, a complex that specifically methylates 'Lys-4' of histone H3 (H3K4). Functions as a transcriptional regulator. Binds to the TERT promoter and represses telomerase expression. Plays a role in TGFB1-mediated inhibition of cell-proliferation, possibly regulating SMAD3 transcriptional activity. Represses JUND-mediated transcriptional activation on AP1 sites, as well as that mediated by NFKB subunit RELA. Positively regulates HOXC8 and HOXC6 gene expression. May be involved in normal hematopoiesis through the activation of HOXA9 expression. May be involved in DNA repair. The sequence is that of Menin (MEN1) from Homo sapiens (Human).